A 262-amino-acid chain; its full sequence is MVAWRSAFLVCLAFSLATLVQRGSGDFDDFNLEDAVKETSSVKQPWDHTTTTTTNRPGTTRAPAKPPGSGLDLADALDDQDDGRRKPGIGGRERWNHVTTTTKRPVTTRAPANTLGNDFDLADALDDRNDRDDGRRKPIAGGGGFSDKDLEDIVGGGEYKPDKGKGDGRYGSNDDPGSGMVAEPGTIAGVASALAMALIGAVSSYISYQQKKFCFSIQQGLNADYVKGENLEAVVCEEPQVKYSTLHTQSAEPPPPPEPARI.

The first 25 residues, 1 to 25 (MVAWRSAFLVCLAFSLATLVQRGSG), serve as a signal peptide directing secretion. Residues 26–185 (DFDDFNLEDA…PGSGMVAEPG (160 aa)) lie on the Extracellular side of the membrane. The disordered stretch occupies residues 38 to 181 (ETSSVKQPWD…SNDDPGSGMV (144 aa)). 2 stretches are compositionally biased toward low complexity: residues 49–60 (TTTTTTNRPGTT) and 98–119 (VTTTTKRPVTTRAPANTLGNDF). Composition is skewed to basic and acidic residues over residues 125–136 (LDDRNDRDDGRR) and 159–168 (YKPDKGKGDG). S178 carries O-linked (Xyl...) (chondroitin sulfate) serine glycosylation. A helical membrane pass occupies residues 186–206 (TIAGVASALAMALIGAVSSYI). Residues 207–262 (SYQQKKFCFSIQQGLNADYVKGENLEAVVCEEPQVKYSTLHTQSAEPPPPPEPARI) lie on the Cytoplasmic side of the membrane.

The protein belongs to the CD99 family. Post-translationally, O-glycosylated. In terms of tissue distribution, detected in cerebrospinal fluid (at protein level). Expressed in many tissues, with low expression in thymus.

It localises to the cell membrane. It is found in the cell junction. The protein localises to the secreted. In terms of biological role, plays a role in a late step of leukocyte extravasation helping cells to overcome the endothelial basement membrane. Acts at the same site as, but independently of, PECAM1. Homophilic adhesion molecule, but these interactions may not be required for cell aggregation. This is CD99 antigen-like protein 2 (CD99L2) from Homo sapiens (Human).